We begin with the raw amino-acid sequence, 382 residues long: Mannitol-1-phosphate 5-dehydrogenase (382 aa).

An NAD(+)-binding site is contributed by 3-14; the sequence is AVHFGAGNIGRG.

Belongs to the mannitol dehydrogenase family.

The catalysed reaction is D-mannitol 1-phosphate + NAD(+) = beta-D-fructose 6-phosphate + NADH + H(+). The polypeptide is Mannitol-1-phosphate 5-dehydrogenase (mtlD) (Geobacillus stearothermophilus (Bacillus stearothermophilus)).